Here is a 539-residue protein sequence, read N- to C-terminus: Membrane protein insertase YidC (539 aa).

5 helical membrane passes run 6–26 (TLLV…WQVA), 341–361 (SVIQ…TFIV), 416–436 (LGGC…YWAL), 454–474 (LSAQ…MFLI), and 495–515 (PVMF…YWLV).

This sequence belongs to the OXA1/ALB3/YidC family. Type 1 subfamily. Interacts with the Sec translocase complex via SecD. Specifically interacts with transmembrane segments of nascent integral membrane proteins during membrane integration.

It is found in the cell inner membrane. Required for the insertion and/or proper folding and/or complex formation of integral membrane proteins into the membrane. Involved in integration of membrane proteins that insert both dependently and independently of the Sec translocase complex, as well as at least some lipoproteins. Aids folding of multispanning membrane proteins. This chain is Membrane protein insertase YidC, found in Vibrio vulnificus (strain CMCP6).